The sequence spans 387 residues: Carboxynorspermidine/carboxyspermidine decarboxylase (387 aa).

K51 is subject to N6-(pyridoxal phosphate)lysine. Substrate is bound by residues E248 and D284.

The protein belongs to the Orn/Lys/Arg decarboxylase class-II family. NspC subfamily. Homodimer. Requires pyridoxal 5'-phosphate as cofactor.

The protein localises to the cytoplasm. The catalysed reaction is carboxynorspermidine + H(+) = norspermidine + CO2. It catalyses the reaction carboxyspermidine + H(+) = spermidine + CO2. Catalyzes the decarboxylation of carboxynorspermidine and carboxyspermidine. Essential for biofilm formation. The protein is Carboxynorspermidine/carboxyspermidine decarboxylase of Vibrio cholerae serotype O1 (strain ATCC 39315 / El Tor Inaba N16961).